Here is a 356-residue protein sequence, read N- to C-terminus: MFLEKLKLLNSIFEEVESKLSDLSVISNQEEYRELTKQHFYLRPLAEKYIRYSKLLNEIKDAEELQKSKDAEMKEIAFAEYNNLIEKRNQMENEIKVLLIPTDPNEDKNIIVEIRAGTGGNEAALFVGDLYGMYTRFAERNGWKYEVLGSNPTGLGGYKEVVFEINGGKVWRCFKFERGAHRVQRVPETEASGRVHTSAATVAVLPEAEEVDVEIKMEDLRIDTYRASGAGGQHINKTDSAIRITHLPTGLVVACQDERSQIKNRAKAFKVLRAKIYEQRILEHEMRLSSERKQQIGSGDRSEKIRTYNFPQNRITDHRIGYSVYNITEVMDGNLSELVNKLIKADIESKLKENNI.

Glutamine 233 is subject to N5-methylglutamine.

It belongs to the prokaryotic/mitochondrial release factor family. In terms of processing, methylated by PrmC. Methylation increases the termination efficiency of RF1.

Its subcellular location is the cytoplasm. Functionally, peptide chain release factor 1 directs the termination of translation in response to the peptide chain termination codons UAG and UAA. In Endomicrobium trichonymphae, this protein is Peptide chain release factor 1.